The chain runs to 278 residues: Large ribosomal subunit protein uL2 (278 aa).

The interval 226–278 is disordered; that stretch reads NPIDHPHGGGEGRTSGGRHPVTPWGKPTKGKKTRSNKSTDKFILISRHKRKKK.

This sequence belongs to the universal ribosomal protein uL2 family. In terms of assembly, part of the 50S ribosomal subunit. Forms a bridge to the 30S subunit in the 70S ribosome.

Its function is as follows. One of the primary rRNA binding proteins. Required for association of the 30S and 50S subunits to form the 70S ribosome, for tRNA binding and peptide bond formation. It has been suggested to have peptidyltransferase activity; this is somewhat controversial. Makes several contacts with the 16S rRNA in the 70S ribosome. This is Large ribosomal subunit protein uL2 from Rhodopseudomonas palustris (strain HaA2).